Reading from the N-terminus, the 341-residue chain is KRR1 small subunit processome component homolog (341 aa).

The KH domain maps to aspartate 126–asparagine 194. Residues lysine 230–lysine 244 are compositionally biased toward basic residues. A disordered region spans residues lysine 230 to valine 327. Residues phenylalanine 271–lysine 341 are a coiled coil. 2 stretches are compositionally biased toward basic and acidic residues: residues leucine 272–aspartate 303 and glutamate 313–valine 327.

This sequence belongs to the KRR1 family. Monomer. Component of the ribosomal small subunit (SSU) processome.

It localises to the nucleus. The protein localises to the nucleolus. Its function is as follows. Required for 40S ribosome biogenesis. Involved in nucleolar processing of pre-18S ribosomal RNA and ribosome assembly. Binds to RNA. Required for female germline development, cell viability during eye development and for survival of dividing cells and epithelial cells during early wing disk development. This is KRR1 small subunit processome component homolog from Drosophila grimshawi (Hawaiian fruit fly).